Here is a 481-residue protein sequence, read N- to C-terminus: Cobyric acid synthase (481 aa).

A GATase cobBQ-type domain is found at 248-435; sequence NTVIAVPMLP…LHGLFHGGAF (188 aa). Cys329 functions as the Nucleophile in the catalytic mechanism. The active site involves His427.

It belongs to the CobB/CobQ family. CobQ subfamily.

Its pathway is cofactor biosynthesis; adenosylcobalamin biosynthesis. Catalyzes amidations at positions B, D, E, and G on adenosylcobyrinic A,C-diamide. NH(2) groups are provided by glutamine, and one molecule of ATP is hydrogenolyzed for each amidation. This Granulibacter bethesdensis (strain ATCC BAA-1260 / CGDNIH1) protein is Cobyric acid synthase.